A 231-amino-acid polypeptide reads, in one-letter code: NADH-ubiquinone oxidoreductase chain 4 (231 aa).

The next 6 helical transmembrane spans lie at 1 to 21 (PIAGSMVLAAILLKLGGYGII), 34 to 54 (MFLPFIVLALWGAILANLTCL), 63 to 85 (IAYSSISHMGLVVAAIIIQTPWG), 89 to 111 (AMALMIAHGFTSSALFCLANTTY), 128 to 148 (ILPMTTTWWLFVNLMNIAIPP), and 169 to 189 (TIIMLGLSMLITASYSLHMFL).

The protein belongs to the complex I subunit 4 family.

The protein localises to the mitochondrion membrane. It catalyses the reaction a ubiquinone + NADH + 5 H(+)(in) = a ubiquinol + NAD(+) + 4 H(+)(out). In terms of biological role, core subunit of the mitochondrial membrane respiratory chain NADH dehydrogenase (Complex I) that is believed to belong to the minimal assembly required for catalysis. Complex I functions in the transfer of electrons from NADH to the respiratory chain. The immediate electron acceptor for the enzyme is believed to be ubiquinone. In Deinagkistrodon acutus (Hundred-pace snake), this protein is NADH-ubiquinone oxidoreductase chain 4 (MT-ND4).